The sequence spans 256 residues: Tyrosine-protein kinase-interacting protein (256 aa).

The segment covering 1–14 (MANEGEEIELTEFP) has biased composition (acidic residues). The segment at 1 to 49 (MANEGEEIELTEFPETEKERKDEEKLSSCSEETTNTSSSSGSDHVPVPI) is disordered. Residues 1-228 (MANEGEEIEL…DLKRLENKIN (228 aa)) lie on the Cytoplasmic side of the membrane. Basic and acidic residues predominate over residues 15–26 (ETEKERKDEEKL). Residues 27-42 (SSCSEETTNTSSSSGS) show a composition bias toward low complexity. Residue Y114 is modified to Phosphotyrosine; by host LCK. Y127 bears the Phosphotyrosine; by host mark. The CSKH/LBD2 stretch occupies residues 146–155 (EDLQSFLEKY). The interval 162–183 (PKRDLSATWDPGMPTPPLPPRP) is disordered. Positions 174-183 (MPTPPLPPRP) are SH3B/LBD1. Residues 174–183 (MPTPPLPPRP) are compositionally biased toward pro residues. The helical transmembrane segment at 229-249 (VIICLVVVILAVLLLVTVLSI) threads the bilayer. Residues 250–256 (LHIGMKS) lie on the Extracellular side of the membrane.

As to quaternary structure, binds host LCK, human WDR48 and human NXF1/TAP. Forms a complex with activated LCK and STAT1 and STAT3. In terms of processing, phosphorylation on Tyr-114 acts as a docking site for the recruitment of STATs 1 and 3.

The protein localises to the host cell membrane. Functionally, plays a critical role in virus induced T-cell transformation. Binds to T-cell-specific tyrosine kinase LCK SH2 and SH3 domains, thereby activating its kinase activity. Once phosphorylated by host LCK, forms a complex with at least STAT 1 and 3, resulting on the phosphorylation of STAT3 and presumably STAT1, and their migration into the nucleus to induce transcription of target genes. Stimulates host ILF3/NF-AT-90 activity. Association with host NXF1/TAP transduces the signal up-regulating surface expression of adhesion molecules as well as activating NF-kappa-B activity. Acts synergistically with StpC to stimulate NF-kappa-B activity and interleukin-2 gene expression. Activation of NF-kappa-B protects lymphocytes from apoptosis, thereby facilitating viral induced cell transformation. May cause down-regulation of host LCK and cell apoptosis when stably overexpressed ex vivo. Interaction with WDR48 induce degradation of T-cell receptor in a lysosome-dependent fashion, when both proteins are overexpressed. The biological effect of this interaction remains controversial since no T-cell receptor degradation is observed in infected cells. The protein is Tyrosine-protein kinase-interacting protein of Saimiri sciureus (Common squirrel monkey).